The chain runs to 150 residues: Large ribosomal subunit protein bL9 (150 aa).

This sequence belongs to the bacterial ribosomal protein bL9 family.

Binds to the 23S rRNA. The protein is Large ribosomal subunit protein bL9 of Mycoplasma genitalium (strain ATCC 33530 / DSM 19775 / NCTC 10195 / G37) (Mycoplasmoides genitalium).